The following is a 30-amino-acid chain: Trypsin inhibitor 2 (30 aa).

Cystine bridges form between cysteine 2–cysteine 19, cysteine 9–cysteine 21, and cysteine 15–cysteine 27.

The protein belongs to the protease inhibitor I7 (squash-type serine protease inhibitor) family.

The protein localises to the secreted. Inhibits trypsin. The protein is Trypsin inhibitor 2 of Ecballium elaterium (Squirting cucumber).